The primary structure comprises 366 residues: MAARQQQKGTGFGVQYEDFVPKSEWKDQPEATILNIDLTGFAKEQMKVTYVHSSKMIRVTGERPLANRKWNRFNEVFTVPQNCLVDKIHGSFKKNVLTITMPKETITKVAYLPETSRTEAAALEKAAKLEEKRLLEESRRKEKEEEEAKQMKKQLLEEKEALIRKLQEEAKAKEEAEMRKLQEEAKANEEAAAKKLQEEIEAKEKLEERKLEERRLEERKLEDMKLAEEAKLKKIQERKSVDESGEKEKILKPEVVYTKSGHVATPKPESGSGLKSGFGGVGEVVKSAEEKLGNLVEKEKKMGKGIMEKIRRKEITSEEKKLMMNVGVAALVIFALGAYVSYTFCSSSSSSSSSSPSSSSSSTKPE.

One can recognise a sHSP domain in the interval 14 to 121; the sequence is VQYEDFVPKS…LPETSRTEAA (108 aa). An A-1 repeat occupies 129 to 133; that stretch reads LEEKR. The tract at residues 129–220 is 6 X 5 AA repeats A of L-E-E-[SKR]-[ERK]; it reads LEEKRLLEES…LEERRLEERK (92 aa). Residues 135-139 form an A-2 repeat; sequence LEESR. An A-3 repeat occupies 156–160; sequence LEEKE. One copy of the B-1 repeat lies at 163–176; the sequence is IRKLQEEAKAKEEA. Residues 163 to 206 form a 3 X 14 AA repeats B of [IMA]-[RK]-K-L-Q-E-E-A-K-A-K-E-[EK]-[LA] region; the sequence is IRKLQEEAKAKEEAEMRKLQEEAKANEEAAAKKLQEEIEAKEKL. A B-2 repeat occupies 178 to 191; the sequence is MRKLQEEAKANEEA. One copy of the B-3 repeat lies at 193–205; sequence AKKLQEEIEAKEK. An A-4 repeat occupies 206-210; the sequence is LEERK. The A-5 repeat unit spans residues 211-215; sequence LEERR. The stretch at 216–220 is one A-6 repeat; that stretch reads LEERK. A helical transmembrane segment spans residues 322-342; the sequence is LMMNVGVAALVIFALGAYVSY. The tract at residues 345-366 is disordered; sequence CSSSSSSSSSSPSSSSSSTKPE. The span at 346-366 shows a compositional bias: low complexity; sequence SSSSSSSSSSPSSSSSSTKPE.

It belongs to the small heat shock protein (HSP20) family.

The protein localises to the cell membrane. Functionally, seems to not be involved in heat resistance. Unable to mediate restriction of long-distance movement of the pathogenic tobacco etch virus (TEV) without causing a hypersensitive response or inducing systemic acquired resistance. The protein is Inactive protein RESTRICTED TEV MOVEMENT 2 (RTM2) of Arabidopsis thaliana (Mouse-ear cress).